We begin with the raw amino-acid sequence, 1131 residues long: Plasma membrane ATPase (1131 aa).

A run of 6 helical transmembrane segments spans residues proline 77–alanine 97, isoleucine 98–isoleucine 118, glycine 151–leucine 171, alanine 231–glycine 251, methionine 265–phenylalanine 285, and methionine 305–leucine 325. The active-site 4-aspartylphosphate intermediate is the aspartate 357. Mg(2+) contacts are provided by aspartate 615 and aspartate 619. 5 consecutive transmembrane segments (helical) span residues alanine 642–alanine 662, leucine 689–phenylalanine 709, isoleucine 733–alanine 753, leucine 884–phenylalanine 904, and valine 946–leucine 966. Residues lysine 994 to phenylalanine 1010 are compositionally biased toward basic and acidic residues. Disordered regions lie at residues lysine 994–asparagine 1023 and arginine 1067–glutamate 1131. The segment covering serine 1089–lysine 1100 has biased composition (polar residues). Residues isoleucine 1118–glutamate 1131 show a composition bias toward basic and acidic residues.

The protein belongs to the cation transport ATPase (P-type) (TC 3.A.3) family. Type IIIA subfamily.

It localises to the cell membrane. It carries out the reaction ATP + H2O + H(+)(in) = ADP + phosphate + 2 H(+)(out). Its function is as follows. The plasma membrane ATPase of plants and fungi is a hydrogen ion pump. The proton gradient it generates drives the active transport of nutrients by H(+)-symport. The resulting external acidification and/or internal alkinization may mediate growth responses. The polypeptide is Plasma membrane ATPase (PMA1) (Dunaliella bioculata (Green alga)).